We begin with the raw amino-acid sequence, 155 residues long: Medium/long-chain acyl-CoA thioesterase YigI (155 aa).

The protein belongs to the YigI thioesterase family.

The protein resides in the cytoplasm. The enzyme catalyses a fatty acyl-CoA + H2O = a fatty acid + CoA + H(+). It carries out the reaction a medium-chain fatty acyl-CoA + H2O = a medium-chain fatty acid + CoA + H(+). It catalyses the reaction a long-chain fatty acyl-CoA + H2O = a long-chain fatty acid + CoA + H(+). Its function is as follows. Displays thioesterase activity against medium- to long-chain acyl-CoA substrates. Is involved in the thioesterase-dependent beta-oxidation pathway of (9Z,11E)-octadecadienoate (conjugated linoleic acid or CLA), along with TesB and FadM. The sequence is that of Medium/long-chain acyl-CoA thioesterase YigI (yigI) from Shigella flexneri.